The chain runs to 264 residues: Ribosomal protein L11 methyltransferase (264 aa).

The S-adenosyl-L-methionine site is built by T116, G137, D159, and N200.

The protein belongs to the methyltransferase superfamily. PrmA family.

Its subcellular location is the cytoplasm. It catalyses the reaction L-lysyl-[protein] + 3 S-adenosyl-L-methionine = N(6),N(6),N(6)-trimethyl-L-lysyl-[protein] + 3 S-adenosyl-L-homocysteine + 3 H(+). Its function is as follows. Methylates ribosomal protein L11. This Thermotoga petrophila (strain ATCC BAA-488 / DSM 13995 / JCM 10881 / RKU-1) protein is Ribosomal protein L11 methyltransferase.